A 657-amino-acid polypeptide reads, in one-letter code: Glycogen debranching enzyme (657 aa).

Asp-336 (nucleophile) is an active-site residue. Glu-371 functions as the Proton donor in the catalytic mechanism. Positions 460–479 are disordered; that stretch reads ANGEENRDGTNNNYSNNHGK.

The protein belongs to the glycosyl hydrolase 13 family.

The catalysed reaction is Hydrolysis of (1-&gt;6)-alpha-D-glucosidic linkages to branches with degrees of polymerization of three or four glucose residues in limit dextrin.. It functions in the pathway glycan degradation; glycogen degradation. In terms of biological role, removes maltotriose and maltotetraose chains that are attached by 1,6-alpha-linkage to the limit dextrin main chain, generating a debranched limit dextrin. In Shigella dysenteriae serotype 1 (strain Sd197), this protein is Glycogen debranching enzyme.